A 456-amino-acid polypeptide reads, in one-letter code: tRNA modification GTPase MnmE (456 aa).

Arginine 21, glutamate 85, and lysine 124 together coordinate (6S)-5-formyl-5,6,7,8-tetrahydrofolate. The TrmE-type G domain maps to glutamine 220–glycine 379. Asparagine 230 provides a ligand contact to K(+). GTP is bound by residues asparagine 230–serine 235, serine 249–threonine 255, and aspartate 274–glycine 277. Residue serine 234 participates in Mg(2+) binding. Residues serine 249, isoleucine 251, and threonine 254 each coordinate K(+). Threonine 255 serves as a coordination point for Mg(2+). Residue lysine 456 participates in (6S)-5-formyl-5,6,7,8-tetrahydrofolate binding.

This sequence belongs to the TRAFAC class TrmE-Era-EngA-EngB-Septin-like GTPase superfamily. TrmE GTPase family. Homodimer. Heterotetramer of two MnmE and two MnmG subunits. K(+) serves as cofactor.

It is found in the cytoplasm. Functionally, exhibits a very high intrinsic GTPase hydrolysis rate. Involved in the addition of a carboxymethylaminomethyl (cmnm) group at the wobble position (U34) of certain tRNAs, forming tRNA-cmnm(5)s(2)U34. In Leptospira interrogans serogroup Icterohaemorrhagiae serovar copenhageni (strain Fiocruz L1-130), this protein is tRNA modification GTPase MnmE.